Consider the following 866-residue polypeptide: DNA mismatch repair protein MutS (866 aa).

618-625 (GPNMSGKS) is a binding site for ATP.

This sequence belongs to the DNA mismatch repair MutS family.

This protein is involved in the repair of mismatches in DNA. It is possible that it carries out the mismatch recognition step. This protein has a weak ATPase activity. The protein is DNA mismatch repair protein MutS of Flavobacterium psychrophilum (strain ATCC 49511 / DSM 21280 / CIP 103535 / JIP02/86).